The following is a 667-amino-acid chain: MKAIVFAYHDIGCVGLNALAEAGYDIQAVFTHTDNPGENRFFSSVARVAADLALPVFAPEDVNHPLWVERIRELQPDIIFSFYYRNMLSDEILSLAPQGGFNLHGSLLPQYRGRAPINWVLVNGETETGVTLHQMVKKADAGPIAGQYKVAISDVDTALTLHAKMRDAAQELLRNLLPRMKEGPLPLTPQKEADASYFGRRTAADGEIHWQKSAFTINNLVRAVTEPYPGAFSYLGQRKLTIWRSRPLDLVHNKLPGTVLSTAPLTVACGEGALEIITGQGEAGLYVQGDRLAQEMGIVTDVRLGNKPSNTLKRRTRVLILGVNGFIGNHLTERLLQDDRYEVYGLDIGSDAISRFLGNPAFHFVEGDISIHSEWIEYHIKKCDVILPLVAIATPIEYTRNPLRVFELDFEENLKIVRDCVKYNKRIVFPSTSEVYGMCDDKEFDEDTSRLIVGPINKQRWIYSVSKQLLDRVIWAYGVKEGLKFTLFRPFNWMGPRLDNLDAARIGSSRAITQLILNLVEGSPIKLVDGGAQKRCFTDIHDGIEALFRIIENRDGCCDGRIINIGNPTNEASIRELAEMLLTSFENHELRDHFPPFAGFKDIESSAYYGKGYQDVEYRTPSIKNARRILHWQPEIAMQQTVTETLDFFLRAAVIEKTAAPKDELNA.

Positions 1-304 are formyltransferase ArnAFT; the sequence is MKAIVFAYHD…EMGIVTDVRL (304 aa). His104 acts as the Proton donor; for formyltransferase activity in catalysis. (6R)-10-formyltetrahydrofolate-binding positions include Arg114 and 136 to 140; that span reads VKKAD. The tract at residues 314-667 is dehydrogenase ArnADH; the sequence is RRTRVLILGV…TAAPKDELNA (354 aa). NAD(+) contacts are provided by residues Asp347 and 368–369; that span reads DI. UDP-alpha-D-glucuronate is bound by residues Ala393, Tyr398, and 432 to 433; that span reads TS. Catalysis depends on Glu434, which acts as the Proton acceptor; for decarboxylase activity. UDP-alpha-D-glucuronate-binding positions include Arg460, Asn492, 526 to 535, and Tyr613; that span reads KLVDGGAQKR. Residue Arg619 is the Proton donor; for decarboxylase activity of the active site.

It in the N-terminal section; belongs to the Fmt family. UDP-L-Ara4N formyltransferase subfamily. This sequence in the C-terminal section; belongs to the NAD(P)-dependent epimerase/dehydratase family. UDP-glucuronic acid decarboxylase subfamily. Homohexamer, formed by a dimer of trimers.

The catalysed reaction is UDP-alpha-D-glucuronate + NAD(+) = UDP-beta-L-threo-pentopyranos-4-ulose + CO2 + NADH. The enzyme catalyses UDP-4-amino-4-deoxy-beta-L-arabinose + (6R)-10-formyltetrahydrofolate = UDP-4-deoxy-4-formamido-beta-L-arabinose + (6S)-5,6,7,8-tetrahydrofolate + H(+). It participates in nucleotide-sugar biosynthesis; UDP-4-deoxy-4-formamido-beta-L-arabinose biosynthesis; UDP-4-deoxy-4-formamido-beta-L-arabinose from UDP-alpha-D-glucuronate: step 1/3. It functions in the pathway nucleotide-sugar biosynthesis; UDP-4-deoxy-4-formamido-beta-L-arabinose biosynthesis; UDP-4-deoxy-4-formamido-beta-L-arabinose from UDP-alpha-D-glucuronate: step 3/3. The protein operates within bacterial outer membrane biogenesis; lipopolysaccharide biosynthesis. Its function is as follows. Bifunctional enzyme that catalyzes the oxidative decarboxylation of UDP-glucuronic acid (UDP-GlcUA) to UDP-4-keto-arabinose (UDP-Ara4O) and the addition of a formyl group to UDP-4-amino-4-deoxy-L-arabinose (UDP-L-Ara4N) to form UDP-L-4-formamido-arabinose (UDP-L-Ara4FN). The modified arabinose is attached to lipid A and is required for resistance to polymyxin and cationic antimicrobial peptides. This is Bifunctional polymyxin resistance protein ArnA from Yersinia pestis bv. Antiqua (strain Antiqua).